The following is a 297-amino-acid chain: Aspartate carbamoyltransferase catalytic subunit (297 aa).

The carbamoyl phosphate site is built by Arg52 and Thr53. Lys80 provides a ligand contact to L-aspartate. Carbamoyl phosphate contacts are provided by Arg102, His130, and Gln133. Arg167 and Arg217 together coordinate L-aspartate. Carbamoyl phosphate is bound by residues Gly256 and Pro257.

Belongs to the aspartate/ornithine carbamoyltransferase superfamily. ATCase family. In terms of assembly, heterododecamer (2C3:3R2) of six catalytic PyrB chains organized as two trimers (C3), and six regulatory PyrI chains organized as three dimers (R2).

It carries out the reaction carbamoyl phosphate + L-aspartate = N-carbamoyl-L-aspartate + phosphate + H(+). Its pathway is pyrimidine metabolism; UMP biosynthesis via de novo pathway; (S)-dihydroorotate from bicarbonate: step 2/3. Its function is as follows. Catalyzes the condensation of carbamoyl phosphate and aspartate to form carbamoyl aspartate and inorganic phosphate, the committed step in the de novo pyrimidine nucleotide biosynthesis pathway. The protein is Aspartate carbamoyltransferase catalytic subunit of Helicobacter hepaticus (strain ATCC 51449 / 3B1).